We begin with the raw amino-acid sequence, 550 residues long: Protein UshA (550 aa).

The first 25 residues, 1-25 (MKFLKRGVALALLAAFALTTQPAQA), serve as a signal peptide directing secretion. 7 residues coordinate Zn(2+): Asp41, His43, Asp84, Asn116, His217, His252, and Gln254. Cys258 and Cys275 form a disulfide bridge. Substrate contacts are provided by residues Phe429 and 498–504 (FNATGGD).

This sequence belongs to the 5'-nucleotidase family. Monomer. The cofactor is Zn(2+).

It is found in the periplasm. It catalyses the reaction UDP-sugar + H2O = UMP + alpha-D-aldose 1-phosphate.. The enzyme catalyses a ribonucleoside 5'-phosphate + H2O = a ribonucleoside + phosphate. Degradation of external UDP-glucose to uridine monophosphate and glucose-1-phosphate, which can then be used by the cell. The protein is Protein UshA (ushA) of Salmonella pullorum.